The following is a 201-amino-acid chain: CDP-diacylglycerol--serine O-phosphatidyltransferase (201 aa).

6 consecutive transmembrane segments (helical) span residues 19–39 (IITG…LSII), 57–77 (FGAE…PAYL), 88–108 (LISA…FGIL), 112–132 (GFIG…CQLI), 133–153 (NSYL…ISDI), and 162–182 (IFIY…PHFA).

It belongs to the CDP-alcohol phosphatidyltransferase class-I family.

It localises to the cell membrane. The catalysed reaction is a CDP-1,2-diacyl-sn-glycerol + L-serine = a 1,2-diacyl-sn-glycero-3-phospho-L-serine + CMP + H(+). This Methanocaldococcus jannaschii (strain ATCC 43067 / DSM 2661 / JAL-1 / JCM 10045 / NBRC 100440) (Methanococcus jannaschii) protein is CDP-diacylglycerol--serine O-phosphatidyltransferase (pssA).